The primary structure comprises 94 residues: PqqA binding protein (94 aa).

Belongs to the PqqD family. As to quaternary structure, monomer. Interacts with PqqE.

The protein operates within cofactor biosynthesis; pyrroloquinoline quinone biosynthesis. In terms of biological role, functions as a PqqA binding protein and presents PqqA to PqqE, in the pyrroloquinoline quinone (PQQ) biosynthetic pathway. In Pseudomonas syringae pv. syringae (strain B728a), this protein is PqqA binding protein.